The primary structure comprises 780 residues: Oocyte zinc finger protein XlCOF8.4 (780 aa).

15 C2H2-type zinc fingers span residues 250 to 272, 278 to 300, 306 to 328, 334 to 356, 362 to 384, 390 to 412, 418 to 440, 446 to 468, 474 to 496, 618 to 640, 646 to 668, 674 to 696, 702 to 724, 730 to 752, and 758 to 780; these read FPCSECGKCFAGSSELNVHRRTH, FSCSQCGKCFSNQTKLKYHHRTH, FSCSECGKCFSTPHVRARHQKTH, FPCSECGKCFARSSDVTVHRRTH, YSCSQCGKCFTRSSDLNVHRRTH, YSCSHCGKCFTTSSELNVHRRTH, YSCSECGKSFPTSSEFTSHWKTH, FSCVQCGKCFSKDTHLKYHYRTH, FSCFECGKCFTHNGSLKVHLKIH, LSCSECGKCFSTYHVLARHQKTH, FSCSECEKCYARSSDLNVHRRTH, YSCSECGKCFTRSSDFNVHRRTH, YSCSECGRCFPTSSVLTSHWRTH, FSCTECGKCFSRETYLKYHHRTH, and FSCSECGKCFTCNSSLKVHFQLH.

The protein belongs to the krueppel C2H2-type zinc-finger protein family.

It localises to the nucleus. Its function is as follows. May be involved in transcriptional regulation. This is Oocyte zinc finger protein XlCOF8.4 from Xenopus laevis (African clawed frog).